A 222-amino-acid polypeptide reads, in one-letter code: Formimidoylglutamase (222 aa).

Positions 34, 59, 61, 63, 150, and 152 each coordinate Mn(2+).

The protein belongs to the arginase family. It depends on Mn(2+) as a cofactor.

It carries out the reaction N-formimidoyl-L-glutamate + H2O = formamide + L-glutamate. Its pathway is amino-acid degradation; L-histidine degradation into L-glutamate; L-glutamate from N-formimidoyl-L-glutamate (hydrolase route): step 1/1. Its function is as follows. Catalyzes the conversion of N-formimidoyl-L-glutamate to L-glutamate and formamide. The polypeptide is Formimidoylglutamase (hutG) (Klebsiella aerogenes (Enterobacter aerogenes)).